Here is a 161-residue protein sequence, read N- to C-terminus: Peroxynitrite isomerase 2 (161 aa).

The GXWXGXG motif lies at 17 to 23; sequence GTWAGQG. Heme b is bound at residue His152.

It belongs to the nitrobindin family. As to quaternary structure, homodimer. The cofactor is heme b.

The catalysed reaction is peroxynitrite = nitrate. It participates in nitrogen metabolism. Functionally, heme-binding protein able to scavenge peroxynitrite and to protect free L-tyrosine against peroxynitrite-mediated nitration, by acting as a peroxynitrite isomerase that converts peroxynitrite to nitrate. Therefore, this protein likely plays a role in peroxynitrite sensing and in the detoxification of reactive nitrogen and oxygen species (RNS and ROS, respectively). Is able to bind nitric oxide (NO) in vitro, but may act as a sensor of peroxynitrite levels in vivo. This Mycobacterium ulcerans (strain Agy99) protein is Peroxynitrite isomerase 2.